Reading from the N-terminus, the 364-residue chain is Histidinol-phosphate aminotransferase BQ2027_MB2256C (364 aa).

The residue at position 220 (Lys-220) is an N6-(pyridoxal phosphate)lysine.

This sequence belongs to the class-I pyridoxal-phosphate-dependent aminotransferase family. As to quaternary structure, monomer. It depends on pyridoxal 5'-phosphate as a cofactor.

The protein resides in the secreted. It localises to the cell wall. The catalysed reaction is L-histidinol phosphate + 2-oxoglutarate = 3-(imidazol-4-yl)-2-oxopropyl phosphate + L-glutamate. Functionally, aminotransferase that catalyzes the conversion of histidinol phosphate and 2-oxoglutarate into L-glutamate and imidazole acetol phosphate. Might play a significant role in mediating histidine biosynthesis during infection. Facilitates mycobacterial survival and virulence in macrophages. The polypeptide is Histidinol-phosphate aminotransferase BQ2027_MB2256C (Mycobacterium bovis (strain ATCC BAA-935 / AF2122/97)).